A 479-amino-acid chain; its full sequence is MKGGELLVLLLASSLCLSAAVAAQETCPADIGAKCTDAASDDWEGEFFPGIDKINYEGPTSKKPLSYKWYNAEEVILGKKMKDWFRFSVAFWHTFRGTGGDPFGAPTKNWPWEDGTNSLAMAKRRMKAHFEFMEKLGVERWCFHDRDIAPDGKTLAETNANLDEIVELAKQLQSETNIKPLWGTAQLFMHPRYMHGAATSPEVKVYAYAAAQVKKALEVTHYLGGENYVFWGGREGYQTLLNTDMKRELEHLANFLQAAVNHKKKIGFNGTLLIEPKPQEPTKHQYDWDVATTFSFLQKFGLTGEFKINVECNHATLSGHSCHHELETARINDILGNIDANTGDPQVGWDTDEFLTDISEATLIMSSVVKNDGLAPGGFNFYAKLRRESTDVEDLFIAHISGMDTMARGRRNVVKLIEDGSLDELVRKRYQSFDTEIGAMIEAGKGDFETLEKKALEWGEPTVPSGKQELAEMLFQSAL.

Residue H144 is part of the active site. Residues E275, E311, H314, D339, D350, D352, and Y382 each contribute to the Mn(2+) site.

It belongs to the xylose isomerase family. As to quaternary structure, homodimer. The cofactor is Mn(2+).

It catalyses the reaction alpha-D-xylose = alpha-D-xylulofuranose. The polypeptide is Xylose isomerase (XYLA) (Hordeum vulgare (Barley)).